A 169-amino-acid chain; its full sequence is MLNTYTNSSTKIQGRLSVWLANHKLPHRPLGFDYQGVEILQIRSEDWLSIAVALYVYGFNYLRSQCAYDVAPGGLLASVYHFTKIEDNVDQPEEICIKIFVSRQKPKIPSVFWIWKSADFQERESYDMLGISYENHPRLKRILMPDTWIGWPLRKDYIVPDFYELQDAY.

It belongs to the complex I 30 kDa subunit family. As to quaternary structure, NDH is composed of at least 16 different subunits, 5 of which are encoded in the nucleus.

Its subcellular location is the plastid. The protein resides in the chloroplast thylakoid membrane. It catalyses the reaction a plastoquinone + NADH + (n+1) H(+)(in) = a plastoquinol + NAD(+) + n H(+)(out). The catalysed reaction is a plastoquinone + NADPH + (n+1) H(+)(in) = a plastoquinol + NADP(+) + n H(+)(out). In terms of biological role, NDH shuttles electrons from NAD(P)H:plastoquinone, via FMN and iron-sulfur (Fe-S) centers, to quinones in the photosynthetic chain and possibly in a chloroplast respiratory chain. The immediate electron acceptor for the enzyme in this species is believed to be plastoquinone. Couples the redox reaction to proton translocation, and thus conserves the redox energy in a proton gradient. This chain is NAD(P)H-quinone oxidoreductase subunit J, chloroplastic, found in Physcomitrium patens (Spreading-leaved earth moss).